A 412-amino-acid chain; its full sequence is Multifunctional CCA protein (412 aa).

The ATP site is built by G8 and R11. Residues G8 and R11 each coordinate CTP. Mg(2+) is bound by residues E21 and D23. The ATP site is built by R91, R137, and R140. CTP is bound by residues R91, R137, and R140. The HD domain maps to 228–329; that stretch reads TGIHTLMTLA…LKLFNAIDVW (102 aa).

This sequence belongs to the tRNA nucleotidyltransferase/poly(A) polymerase family. Bacterial CCA-adding enzyme type 1 subfamily. As to quaternary structure, monomer. Can also form homodimers and oligomers. It depends on Mg(2+) as a cofactor. Requires Ni(2+) as cofactor.

It catalyses the reaction a tRNA precursor + 2 CTP + ATP = a tRNA with a 3' CCA end + 3 diphosphate. The enzyme catalyses a tRNA with a 3' CCA end + 2 CTP + ATP = a tRNA with a 3' CCACCA end + 3 diphosphate. In terms of biological role, catalyzes the addition and repair of the essential 3'-terminal CCA sequence in tRNAs without using a nucleic acid template. Adds these three nucleotides in the order of C, C, and A to the tRNA nucleotide-73, using CTP and ATP as substrates and producing inorganic pyrophosphate. tRNA 3'-terminal CCA addition is required both for tRNA processing and repair. Also involved in tRNA surveillance by mediating tandem CCA addition to generate a CCACCA at the 3' terminus of unstable tRNAs. While stable tRNAs receive only 3'-terminal CCA, unstable tRNAs are marked with CCACCA and rapidly degraded. The chain is Multifunctional CCA protein from Yersinia pseudotuberculosis serotype I (strain IP32953).